The chain runs to 556 residues: Sensory neuron membrane protein 2 (556 aa).

Residues 1 to 6 (MIHWSL) lie on the Cytoplasmic side of the membrane. A helical membrane pass occupies residues 7–27 (IVSALGVCVAVLGGYCGWILF). The Extracellular portion of the chain corresponds to 28 to 522 (PNMVHKKVEQ…KLINTLKTLN (495 aa)). N-linked (GlcNAc...) asparagine glycans are attached at residues asparagine 66, asparagine 274, asparagine 310, and asparagine 324. 2 cysteine pairs are disulfide-bonded: cysteine 320-cysteine 388 and cysteine 349-cysteine 415. Residues 523–543 (IVHWATLCGGIGVAVACLIYY) form a helical membrane-spanning segment. Over 544-556 (IYQRGRVVEPPVK) the chain is Cytoplasmic.

The protein belongs to the CD36 family. As to expression, detected in the head and to a lesser extent in legs and wings.

Its subcellular location is the cell membrane. Plays an olfactory role that is not restricted to pheromone sensitivity. The sequence is that of Sensory neuron membrane protein 2 from Drosophila melanogaster (Fruit fly).